Reading from the N-terminus, the 418-residue chain is Gamma-glutamyl phosphate reductase (418 aa).

Belongs to the gamma-glutamyl phosphate reductase family.

It is found in the cytoplasm. The catalysed reaction is L-glutamate 5-semialdehyde + phosphate + NADP(+) = L-glutamyl 5-phosphate + NADPH + H(+). The protein operates within amino-acid biosynthesis; L-proline biosynthesis; L-glutamate 5-semialdehyde from L-glutamate: step 2/2. Catalyzes the NADPH-dependent reduction of L-glutamate 5-phosphate into L-glutamate 5-semialdehyde and phosphate. The product spontaneously undergoes cyclization to form 1-pyrroline-5-carboxylate. The chain is Gamma-glutamyl phosphate reductase from Desulfosudis oleivorans (strain DSM 6200 / JCM 39069 / Hxd3) (Desulfococcus oleovorans).